The chain runs to 272 residues: Putative phosphoenolpyruvate synthase regulatory protein (272 aa).

ADP is bound at residue 152–159 (GVSRCGKT).

This sequence belongs to the pyruvate, phosphate/water dikinase regulatory protein family. PSRP subfamily.

It carries out the reaction [pyruvate, water dikinase] + ADP = [pyruvate, water dikinase]-phosphate + AMP + H(+). It catalyses the reaction [pyruvate, water dikinase]-phosphate + phosphate + H(+) = [pyruvate, water dikinase] + diphosphate. Functionally, bifunctional serine/threonine kinase and phosphorylase involved in the regulation of the phosphoenolpyruvate synthase (PEPS) by catalyzing its phosphorylation/dephosphorylation. This Pseudomonas putida (strain ATCC 700007 / DSM 6899 / JCM 31910 / BCRC 17059 / LMG 24140 / F1) protein is Putative phosphoenolpyruvate synthase regulatory protein.